We begin with the raw amino-acid sequence, 242 residues long: Fibrinolytic enzyme, isozyme C (242 aa).

A Peptidase S1 domain is found at 1-242; it reads VIGGTNASPG…YLGWIGDNSR (242 aa). A disulfide bond links Cys29 and Cys45. Active-site charge relay system residues include His44 and Asp93. 3 disulfides stabilise this stretch: Cys127–Cys197, Cys158–Cys176, and Cys187–Cys219. Residue Ser191 is the Charge relay system of the active site.

The protein belongs to the peptidase S1 family.

This Lumbricus rubellus (Humus earthworm) protein is Fibrinolytic enzyme, isozyme C.